The sequence spans 391 residues: Deoxyguanosinetriphosphate triphosphohydrolase-like protein (391 aa).

The HD domain occupies 62–198 (RLTHSLEVST…ASLADDISYI (137 aa)).

The protein belongs to the dGTPase family. Type 2 subfamily.

This chain is Deoxyguanosinetriphosphate triphosphohydrolase-like protein, found in Rickettsia akari (strain Hartford).